The primary structure comprises 878 residues: Phosphoenolpyruvate carboxylase (878 aa).

Residues histidine 138 and lysine 544 contribute to the active site.

It belongs to the PEPCase type 1 family. Mg(2+) is required as a cofactor.

It carries out the reaction oxaloacetate + phosphate = phosphoenolpyruvate + hydrogencarbonate. Its function is as follows. Forms oxaloacetate, a four-carbon dicarboxylic acid source for the tricarboxylic acid cycle. The polypeptide is Phosphoenolpyruvate carboxylase (Psychromonas ingrahamii (strain DSM 17664 / CCUG 51855 / 37)).